The chain runs to 234 residues: Glycerol uptake facilitator protein (234 aa).

The next 6 membrane-spanning stretches (helical) occupy residues Phe-9–Pro-29, Gly-37–Gly-57, Pro-61–Ala-81, Val-83–Leu-103, Leu-135–Tyr-155, and Ala-159–Gly-179. The short motif at Asn-65–Ala-67 is the NPA 1 element. The NPA 2 motif lies at Asn-186 to Ala-188. A helical transmembrane segment spans residues Trp-214–Phe-234.

Belongs to the MIP/aquaporin (TC 1.A.8) family.

Its subcellular location is the cell membrane. The catalysed reaction is glycerol(in) = glycerol(out). Mediates glycerol diffusion across the cytoplasmic membrane via a pore-type mechanism. This Streptococcus pneumoniae serotype 4 (strain ATCC BAA-334 / TIGR4) protein is Glycerol uptake facilitator protein (glpF).